A 250-amino-acid polypeptide reads, in one-letter code: NAD-dependent protein deacylase (250 aa).

Residues 1 to 250 (MIVEVARVLA…VVHEVRRLLQ (250 aa)) form the Deacetylase sirtuin-type domain. NAD(+) is bound at residue 20–39 (GAGISAESGVPTFRGKDGLW). 2 residues coordinate substrate: Tyr-64 and Arg-67. 98 to 101 (QNVD) contributes to the NAD(+) binding site. The active-site Proton acceptor is His-116. Residues Cys-124, Cys-127, Cys-150, and Cys-153 each coordinate Zn(2+). Residues 190–192 (GTS), 216–218 (NVE), and Ala-234 contribute to the NAD(+) site.

It belongs to the sirtuin family. Class III subfamily. Requires Zn(2+) as cofactor.

Its subcellular location is the cytoplasm. The enzyme catalyses N(6)-acetyl-L-lysyl-[protein] + NAD(+) + H2O = 2''-O-acetyl-ADP-D-ribose + nicotinamide + L-lysyl-[protein]. It carries out the reaction N(6)-succinyl-L-lysyl-[protein] + NAD(+) + H2O = 2''-O-succinyl-ADP-D-ribose + nicotinamide + L-lysyl-[protein]. Its function is as follows. NAD-dependent lysine deacetylase and desuccinylase that specifically removes acetyl and succinyl groups on target proteins. Modulates the activities of several proteins which are inactive in their acylated form. Deacetylates the N-terminal lysine residue of Alba, the major archaeal chromatin protein and that, in turn, increases Alba's DNA binding affinity, thereby repressing transcription. This is NAD-dependent protein deacylase from Pyrococcus abyssi (strain GE5 / Orsay).